Here is a 350-residue protein sequence, read N- to C-terminus: Methionine import ATP-binding protein MetN (350 aa).

In terms of domain architecture, ABC transporter spans 2–241 (IQIKNLKKEY…PQAPVTRSFV (240 aa)). 38–45 (GHSGAGKS) is a binding site for ATP.

Belongs to the ABC transporter superfamily. Methionine importer (TC 3.A.1.24) family. In terms of assembly, the complex is composed of two ATP-binding proteins (MetN), two transmembrane proteins (MetI) and a solute-binding protein (MetQ).

It is found in the cell inner membrane. The enzyme catalyses L-methionine(out) + ATP + H2O = L-methionine(in) + ADP + phosphate + H(+). It carries out the reaction D-methionine(out) + ATP + H2O = D-methionine(in) + ADP + phosphate + H(+). Functionally, part of the ABC transporter complex MetNIQ involved in methionine import. Responsible for energy coupling to the transport system. The protein is Methionine import ATP-binding protein MetN of Francisella tularensis subsp. holarctica (strain LVS).